The following is a 142-amino-acid chain: Large-conductance mechanosensitive channel (142 aa).

3 helical membrane passes run 14–34 (VVDL…VNSL), 38–58 (VIMP…YYIP), and 82–102 (GQFL…FMVI).

It belongs to the MscL family. Homopentamer.

The protein resides in the cell inner membrane. Functionally, channel that opens in response to stretch forces in the membrane lipid bilayer. May participate in the regulation of osmotic pressure changes within the cell. The polypeptide is Large-conductance mechanosensitive channel (Methylorubrum populi (strain ATCC BAA-705 / NCIMB 13946 / BJ001) (Methylobacterium populi)).